Consider the following 344-residue polypeptide: UDP-galactose/UDP-glucose transporter 5B (344 aa).

The next 8 helical transmembrane spans lie at 16–36, 56–76, 115–135, 142–162, 176–196, 220–240, 246–266, and 292–312; these read LWKG…YGVL, LFLV…ALLA, VQTL…TLIM, FDYL…LFPA, TVWG…TSTF, CVLS…VDFV, CLLD…FISY, and CIWF…IVFG. Residues 324-344 are disordered; it reads KNSQTQPPPPELPQYEKVESS.

It belongs to the nucleotide-sugar transporter family. UDP-galactose:UMP antiporter (TC 2.A.7.11) subfamily.

It is found in the membrane. In terms of biological role, sugar transporter involved in the transport of nucleotide-sugars from cytoplasm into the Golgi and/or the endoplasmic reticulum. The chain is UDP-galactose/UDP-glucose transporter 5B from Arabidopsis thaliana (Mouse-ear cress).